An 898-amino-acid chain; its full sequence is Magnesium-transporting ATPase, P-type 1 (898 aa).

Over 1-94 the chain is Cytoplasmic; sequence MFKEIFTRLI…QPSPWWVHLW (94 aa). Residues 95–115 form a helical membrane-spanning segment; it reads VCYRNPFNILLTILGAISYAT. Position 116 (glutamate 116) is a topological domain, extracellular. The helical transmembrane segment at 117–137 threads the bilayer; sequence DLFAAGVIALMVAISTLLNFI. The Cytoplasmic segment spans residues 138 to 287; it reads QEARSTKAAD…PNAFQQGISR (150 aa). A helical membrane pass occupies residues 288–308; sequence VSMLLIRFMLVMAPVVLLING. The Extracellular portion of the chain corresponds to 309-317; sequence YTKGDWWEA. A helical membrane pass occupies residues 318-335; the sequence is ALFALSVAVGLTPEMLPM. A Mg(2+)-binding site is contributed by glutamate 331. Residues 336–695 are Cytoplasmic-facing; sequence IVTSTLARGA…IEGRRTFANM (360 aa). Aspartate 373 functions as the 4-aspartylphosphate intermediate in the catalytic mechanism. 3 residues coordinate Mg(2+): aspartate 641, aspartate 645, and asparagine 709. Residues 696 to 715 traverse the membrane as a helical segment; that stretch reads LKYIKMTASSNFGNVFSVLV. The Extracellular portion of the chain corresponds to 716-724; sequence ASAFLPFLP. A helical membrane pass occupies residues 725–744; it reads MLPLHLLIQNLLYDVSQVAI. Mg(2+)-binding residues include asparagine 734 and aspartate 738. Residues 745-766 lie on the Cytoplasmic side of the membrane; it reads PFDNVDDEQIQKPQRWNPADLG. A helical transmembrane segment spans residues 767–790; it reads RFMIFFGPISSIFDILTFCLMWWV. Residues 791-799 are Extracellular-facing; sequence FHANTPETQ. The chain crosses the membrane as a helical span at residues 800–818; it reads TLFQSGWFVVGLLSQTLIV. The Cytoplasmic portion of the chain corresponds to 819–831; that stretch reads HMIRTRRVPFIQS. Residues 832–851 traverse the membrane as a helical segment; sequence CASWPLMIMTVIVMIVGIAL. At 852–866 the chain is on the extracellular side; that stretch reads PFSPLASYLQLQALP. The chain crosses the membrane as a helical span at residues 867–886; sequence LSYFPWLVAILAGYMTLTQL. Over 887–898 the chain is Cytoplasmic; it reads VKGFYSRRYGWQ.

The protein belongs to the cation transport ATPase (P-type) (TC 3.A.3) family. Type IIIB subfamily.

The protein localises to the cell inner membrane. The catalysed reaction is Mg(2+)(out) + ATP + H2O = Mg(2+)(in) + ADP + phosphate + H(+). Mediates magnesium influx to the cytosol. This is Magnesium-transporting ATPase, P-type 1 (mgtA) from Escherichia coli O157:H7.